The sequence spans 399 residues: Methylthioribose kinase (399 aa).

ATP is bound by residues Asn-40, Lys-57, and 111–113; that span reads EDL. Asp-229 provides a ligand contact to substrate. 246 to 248 contributes to the ATP binding site; it reads DAE. Position 344 (Arg-344) interacts with substrate.

The protein belongs to the methylthioribose kinase family. In terms of assembly, homodimer.

It catalyses the reaction 5-(methylsulfanyl)-D-ribose + ATP = 5-(methylsulfanyl)-alpha-D-ribose 1-phosphate + ADP + H(+). Its pathway is amino-acid biosynthesis; L-methionine biosynthesis via salvage pathway; S-methyl-5-thio-alpha-D-ribose 1-phosphate from S-methyl-5'-thioadenosine (hydrolase route): step 2/2. Functionally, catalyzes the phosphorylation of methylthioribose into methylthioribose-1-phosphate. This is Methylthioribose kinase from Cronobacter sakazakii (strain ATCC BAA-894) (Enterobacter sakazakii).